The sequence spans 240 residues: Tetrahydromethanopterin S-methyltransferase subunit A (240 aa).

Topologically, residues 1 to 218 are cytoplasmic; that stretch reads MADKKEPAPG…KFHSGVHAGK (218 aa). A 5-hydroxybenzimidazolylcob(I)amide-binding site is contributed by H85. Residues 219-239 form a helical membrane-spanning segment; the sequence is IEGAMIGLTVTISLLGLLLLG. Position 240 (R240) is a topological domain, extracellular.

It belongs to the MtrA family. As to quaternary structure, the complex is composed of 8 subunits; MtrA, MtrB, MtrC, MtrD, MtrE, MtrF, MtrG and MtrH. 5-hydroxybenzimidazolylcob(I)amide is required as a cofactor.

The protein resides in the cell membrane. It catalyses the reaction 5-methyl-5,6,7,8-tetrahydromethanopterin + coenzyme M + 2 Na(+)(in) = 5,6,7,8-tetrahydromethanopterin + methyl-coenzyme M + 2 Na(+)(out). The protein operates within one-carbon metabolism; methanogenesis from CO(2); methyl-coenzyme M from 5,10-methylene-5,6,7,8-tetrahydromethanopterin: step 2/2. Part of a complex that catalyzes the formation of methyl-coenzyme M and tetrahydromethanopterin from coenzyme M and methyl-tetrahydromethanopterin. This is an energy-conserving, sodium-ion translocating step. The chain is Tetrahydromethanopterin S-methyltransferase subunit A from Methanosarcina barkeri (strain Fusaro / DSM 804).